A 204-amino-acid chain; its full sequence is Isochorismatase domain-containing protein 2 (204 aa).

The protein belongs to the isochorismatase family. In terms of assembly, interacts with CDKN2A.

Its subcellular location is the cytoplasm. It is found in the nucleus. The polypeptide is Isochorismatase domain-containing protein 2 (ISOC2) (Bos taurus (Bovine)).